The chain runs to 98 residues: NADH-ubiquinone oxidoreductase chain 4L (98 aa).

The next 3 membrane-spanning stretches (helical) occupy residues 2-22, 29-49, and 61-81; these read PSIF…TLVF, SLLC…LIIL, and ILLL…LVMV.

Belongs to the complex I subunit 4L family. In terms of assembly, core subunit of respiratory chain NADH dehydrogenase (Complex I) which is composed of 45 different subunits.

Its subcellular location is the mitochondrion inner membrane. It catalyses the reaction a ubiquinone + NADH + 5 H(+)(in) = a ubiquinol + NAD(+) + 4 H(+)(out). In terms of biological role, core subunit of the mitochondrial membrane respiratory chain NADH dehydrogenase (Complex I) which catalyzes electron transfer from NADH through the respiratory chain, using ubiquinone as an electron acceptor. Part of the enzyme membrane arm which is embedded in the lipid bilayer and involved in proton translocation. This Avahi laniger (Eastern woolly lemur) protein is NADH-ubiquinone oxidoreductase chain 4L (MT-ND4L).